A 362-amino-acid polypeptide reads, in one-letter code: Phosphoserine aminotransferase (362 aa).

R41 lines the L-glutamate pocket. Pyridoxal 5'-phosphate is bound by residues 75–76, F101, T152, D173, and Q196; that span reads GS. K197 bears the N6-(pyridoxal phosphate)lysine mark. 239–240 is a pyridoxal 5'-phosphate binding site; the sequence is NT.

This sequence belongs to the class-V pyridoxal-phosphate-dependent aminotransferase family. SerC subfamily. As to quaternary structure, homodimer. It depends on pyridoxal 5'-phosphate as a cofactor.

It localises to the cytoplasm. The catalysed reaction is O-phospho-L-serine + 2-oxoglutarate = 3-phosphooxypyruvate + L-glutamate. It carries out the reaction 4-(phosphooxy)-L-threonine + 2-oxoglutarate = (R)-3-hydroxy-2-oxo-4-phosphooxybutanoate + L-glutamate. It functions in the pathway amino-acid biosynthesis; L-serine biosynthesis; L-serine from 3-phospho-D-glycerate: step 2/3. Its function is as follows. Catalyzes the reversible conversion of 3-phosphohydroxypyruvate to phosphoserine and of 3-hydroxy-2-oxo-4-phosphonooxybutanoate to phosphohydroxythreonine. This is Phosphoserine aminotransferase from Leuconostoc mesenteroides subsp. mesenteroides (strain ATCC 8293 / DSM 20343 / BCRC 11652 / CCM 1803 / JCM 6124 / NCDO 523 / NBRC 100496 / NCIMB 8023 / NCTC 12954 / NRRL B-1118 / 37Y).